A 920-amino-acid polypeptide reads, in one-letter code: DNA ligase (920 aa).

Residues 90–94 (DAAYD), 139–140 (SL), and Glu-173 contribute to the NAD(+) site. Lys-175 acts as the N6-AMP-lysine intermediate in catalysis. 4 residues coordinate NAD(+): Arg-196, Glu-235, Lys-360, and Lys-384. The Zn(2+) site is built by Cys-481, Cys-484, Cys-500, and Cys-506. The interval 659 to 691 (RAQGEAAIESAETQGDTASETTGAPTGAEAPLG) is disordered. Polar residues predominate over residues 669-682 (AETQGDTASETTGA). The region spanning 839–920 (SLPQTLAGKT…FAQLLATGTI (82 aa)) is the BRCT domain.

Belongs to the NAD-dependent DNA ligase family. LigA subfamily. It depends on Mg(2+) as a cofactor. The cofactor is Mn(2+).

The catalysed reaction is NAD(+) + (deoxyribonucleotide)n-3'-hydroxyl + 5'-phospho-(deoxyribonucleotide)m = (deoxyribonucleotide)n+m + AMP + beta-nicotinamide D-nucleotide.. DNA ligase that catalyzes the formation of phosphodiester linkages between 5'-phosphoryl and 3'-hydroxyl groups in double-stranded DNA using NAD as a coenzyme and as the energy source for the reaction. It is essential for DNA replication and repair of damaged DNA. In Bifidobacterium longum (strain NCC 2705), this protein is DNA ligase.